A 420-amino-acid polypeptide reads, in one-letter code: Lactosylceramide alpha-2,3-sialyltransferase (420 aa).

Residues 1–39 are disordered; the sequence is MRKKAAGGAERRPLKPRTEAAAAAPAGRAMPSDHSRMKL. Residues 1–67 are Cytoplasmic-facing; that stretch reads MRKKAAGGAE…MRRPNLLLKD (67 aa). Residues 9 to 18 are compositionally biased toward basic and acidic residues; that stretch reads AERRPLKPRT. Residues 20–29 show a composition bias toward low complexity; it reads AAAAAPAGRA. The chain crosses the membrane as a helical span at residues 68 to 88; the sequence is ILKCTLLLFGVWILFYILKLN. At 89 to 420 the chain is on the lumenal side; the sequence is HTTEECDMKR…DLSGGIHSEF (332 aa). Cys197 and Cys355 form a disulfide bridge. A glycan (N-linked (GlcNAc...) asparagine) is linked at Asn238.

Belongs to the glycosyltransferase 29 family.

It is found in the golgi apparatus membrane. It carries out the reaction a beta-D-Gal-(1-&gt;4)-beta-D-Glc-(1&lt;-&gt;1)-Cer(d18:1(4E)) + CMP-N-acetyl-beta-neuraminate = a ganglioside GM3 (d18:1(4E)) + CMP + H(+). The enzyme catalyses ganglioside GA2 (d18:1(4E)/18:0) + CMP-N-acetyl-beta-neuraminate = ganglioside GM2 (d18:1(4E)/18:0) + CMP + H(+). The catalysed reaction is a beta-D-Gal-(1&lt;-&gt;1')-ceramide + CMP-N-acetyl-beta-neuraminate = N-acetyl-alpha-neuraminosyl-(2-&gt;3)-beta-D-galactosyl-(1&lt;-&gt;1')-ceramide + CMP + H(+). It catalyses the reaction ganglioside GA1 (d18:1(4E)/18:0) + CMP-N-acetyl-beta-neuraminate = ganglioside GM1 (d18:1(4E)/18:0) + CMP + H(+). In terms of biological role, transfers the sialyl group (N-acetyl-alpha-neuraminyl or NeuAc) from CMP-NeuAc to the non-reducing terminal galactose (Gal) of glycosphingolipids forming gangliosides (important molecules involved in the regulation of multiple cellular processes, including cell proliferation and differentiation, apoptosis, embryogenesis, development, and oncogenesis). Mainly involved in the biosynthesis of ganglioside GM3 but can also use different glycolipids as substrate acceptors such as D-galactosylceramide (GalCer), asialo-GM2 (GA2) and asialo-GM1 (GA1), although less preferentially than beta-D-Gal-(1-&gt;4)-beta-D-Glc-(1&lt;-&gt;1)-Cer (LacCer). The polypeptide is Lactosylceramide alpha-2,3-sialyltransferase (ST3GAL5) (Bos taurus (Bovine)).